The following is a 345-amino-acid chain: Glycerol-3-phosphate dehydrogenase [NAD(P)+] (345 aa).

Residues Ser-23, Tyr-24, His-44, and Lys-118 each contribute to the NADPH site. Residues Lys-118, Gly-147, and Thr-149 each contribute to the sn-glycerol 3-phosphate site. Ala-151 serves as a coordination point for NADPH. Residues Lys-203, Asp-256, Ser-266, Arg-267, and Asn-268 each contribute to the sn-glycerol 3-phosphate site. Lys-203 functions as the Proton acceptor in the catalytic mechanism. Arg-267 contacts NADPH. Val-291 and Glu-293 together coordinate NADPH.

The protein belongs to the NAD-dependent glycerol-3-phosphate dehydrogenase family.

It is found in the cytoplasm. The enzyme catalyses sn-glycerol 3-phosphate + NAD(+) = dihydroxyacetone phosphate + NADH + H(+). It carries out the reaction sn-glycerol 3-phosphate + NADP(+) = dihydroxyacetone phosphate + NADPH + H(+). Its pathway is membrane lipid metabolism; glycerophospholipid metabolism. Its function is as follows. Catalyzes the reduction of the glycolytic intermediate dihydroxyacetone phosphate (DHAP) to sn-glycerol 3-phosphate (G3P), the key precursor for phospholipid synthesis. In Vibrio vulnificus (strain CMCP6), this protein is Glycerol-3-phosphate dehydrogenase [NAD(P)+].